A 39-amino-acid polypeptide reads, in one-letter code: uncharacterized protein (39 aa).

This is an uncharacterized protein from Haemophilus influenzae (strain ATCC 51907 / DSM 11121 / KW20 / Rd).